The following is a 178-amino-acid chain: MPVTKSLSKLQKNLSKKGKNITVHPKGRKYEKLVRATMREDKIAAKKKLHQDKRVHELARVKFMQDVVNSDTFKGQPIFDHAHTREFIQSFIERDDTELDELKKKRRSNRPPSNRQVLLQQRRDQELKEFKAGFLCPDLSDAKNMEFLRNWNGTFGLLNTLRLIRINDKGEQVVGGNE.

Belongs to the TMA16 family.

The protein resides in the nucleus. In Saccharomyces cerevisiae (strain ATCC 204508 / S288c) (Baker's yeast), this protein is Translation machinery-associated protein 16 (TMA16).